The chain runs to 198 residues: Putative pseudouridine methyltransferase (198 aa).

Positions 132 and 186 each coordinate S-adenosyl-L-methionine.

It belongs to the methyltransferase superfamily. TrmY family.

It localises to the cytoplasm. The sequence is that of Putative pseudouridine methyltransferase from Vibrio vulnificus (strain CMCP6).